The following is a 266-amino-acid chain: Probable septum site-determining protein MinC (266 aa).

Over residues 1–21 (MSEAESTPVEEPVVESTEGSE) the composition is skewed to low complexity. The disordered stretch occupies residues 1–28 (MSEAESTPVEEPVVESTEGSEAIPEVEQ).

This sequence belongs to the MinC family. As to quaternary structure, interacts with MinD and FtsZ.

Its function is as follows. Cell division inhibitor that blocks the formation of polar Z ring septums. Rapidly oscillates between the poles of the cell to destabilize FtsZ filaments that have formed before they mature into polar Z rings. Prevents FtsZ polymerization. The protein is Probable septum site-determining protein MinC of Thermosynechococcus vestitus (strain NIES-2133 / IAM M-273 / BP-1).